A 191-amino-acid polypeptide reads, in one-letter code: dTTP/UTP pyrophosphatase (191 aa).

Aspartate 64 (proton acceptor) is an active-site residue.

The protein belongs to the Maf family. YhdE subfamily. The cofactor is a divalent metal cation.

It localises to the cytoplasm. The enzyme catalyses dTTP + H2O = dTMP + diphosphate + H(+). It carries out the reaction UTP + H2O = UMP + diphosphate + H(+). Its function is as follows. Nucleoside triphosphate pyrophosphatase that hydrolyzes dTTP and UTP. May have a dual role in cell division arrest and in preventing the incorporation of modified nucleotides into cellular nucleic acids. This chain is dTTP/UTP pyrophosphatase, found in Thermosipho africanus (strain TCF52B).